A 321-amino-acid chain; its full sequence is tRNA uridine(34) hydroxylase (321 aa).

In terms of domain architecture, Rhodanese spans 123-217 (SDPDVTVIDT…YLEEVPEGNS (95 aa)). Cys177 serves as the catalytic Cysteine persulfide intermediate. A compositionally biased stretch (basic and acidic residues) spans 294–308 (RKGELHIGDRADIAK). The segment at 294 to 321 (RKGELHIGDRADIAKSRTTQGAPSADGE) is disordered.

The protein belongs to the TrhO family.

It carries out the reaction uridine(34) in tRNA + AH2 + O2 = 5-hydroxyuridine(34) in tRNA + A + H2O. Catalyzes oxygen-dependent 5-hydroxyuridine (ho5U) modification at position 34 in tRNAs. The protein is tRNA uridine(34) hydroxylase of Teredinibacter turnerae (strain ATCC 39867 / T7901).